A 141-amino-acid chain; its full sequence is Cystatin (141 aa).

A signal peptide spans 1–26 (MVHSQLPVAGPLRLLCALLLLPSATM). Positions 29-129 (GGLSPRSVTD…CHFQVWSRPW (101 aa)) constitute a Cystatin domain. The Secondary area of contact signature appears at 73–77 (QVVSG). 2 cysteine pairs are disulfide-bonded: Cys91–Cys107 and Cys120–Cys140.

Belongs to the cystatin family. As to expression, expressed at a low level by the venom gland (at protein level).

It is found in the secreted. Inhibits various C1 cysteine proteases including cathepsin L, papain and cathepsin B. This protein has no toxic activity and its function in the venom is unknown. It may play a role as a housekeeping or regulatory protein. This chain is Cystatin, found in Pseudechis australis (Mulga snake).